Consider the following 104-residue polypeptide: Flagellar hook-basal body complex protein FliE (104 aa).

Belongs to the FliE family.

It localises to the bacterial flagellum basal body. The polypeptide is Flagellar hook-basal body complex protein FliE (Escherichia coli O139:H28 (strain E24377A / ETEC)).